The chain runs to 182 residues: Adenylate kinase (182 aa).

12–17 (GAGKGT) contributes to the ATP binding site. Residues 32–61 (STGDLLRDEVSSGSVLGIKAAEIMNKGELV) are NMP. Residues T33, R38, 59-61 (ELV), 85-88 (GFPR), and Q92 contribute to the AMP site. An LID region spans residues 126-132 (ERGRQDD). R127 contributes to the ATP binding site. Residues R129 and R140 each contribute to the AMP site. Residue A168 participates in ATP binding.

The protein belongs to the adenylate kinase family. In terms of assembly, monomer.

The protein resides in the cytoplasm. The catalysed reaction is AMP + ATP = 2 ADP. It functions in the pathway purine metabolism; AMP biosynthesis via salvage pathway; AMP from ADP: step 1/1. Its function is as follows. Catalyzes the reversible transfer of the terminal phosphate group between ATP and AMP. Plays an important role in cellular energy homeostasis and in adenine nucleotide metabolism. The protein is Adenylate kinase of Prochlorococcus marinus (strain NATL1A).